Here is a 117-residue protein sequence, read N- to C-terminus: Large ribosomal subunit protein bL20c (117 aa).

It belongs to the bacterial ribosomal protein bL20 family.

The protein resides in the plastid. It localises to the chloroplast. In terms of biological role, binds directly to 23S ribosomal RNA and is necessary for the in vitro assembly process of the 50S ribosomal subunit. It is not involved in the protein synthesizing functions of that subunit. In Phalaenopsis aphrodite subsp. formosana (Moth orchid), this protein is Large ribosomal subunit protein bL20c.